The following is a 339-amino-acid chain: Glycerol-3-phosphate dehydrogenase [NAD(P)+] (339 aa).

NADPH-binding residues include Ser15, Tyr16, His36, and Lys110. Residues Lys110, Gly139, and Thr141 each coordinate sn-glycerol 3-phosphate. Ala143 serves as a coordination point for NADPH. Sn-glycerol 3-phosphate-binding residues include Lys195, Asp248, Ser258, Arg259, and Asn260. Lys195 functions as the Proton acceptor in the catalytic mechanism. Arg259 contributes to the NADPH binding site. Positions 283 and 285 each coordinate NADPH.

The protein belongs to the NAD-dependent glycerol-3-phosphate dehydrogenase family.

It is found in the cytoplasm. It catalyses the reaction sn-glycerol 3-phosphate + NAD(+) = dihydroxyacetone phosphate + NADH + H(+). The catalysed reaction is sn-glycerol 3-phosphate + NADP(+) = dihydroxyacetone phosphate + NADPH + H(+). The protein operates within membrane lipid metabolism; glycerophospholipid metabolism. Its function is as follows. Catalyzes the reduction of the glycolytic intermediate dihydroxyacetone phosphate (DHAP) to sn-glycerol 3-phosphate (G3P), the key precursor for phospholipid synthesis. The polypeptide is Glycerol-3-phosphate dehydrogenase [NAD(P)+] (Shigella dysenteriae serotype 1 (strain Sd197)).